The following is a 327-amino-acid chain: Nucleotide-binding protein Mflv_3714 (327 aa).

Basic and acidic residues predominate over residues 1–22 (MTRQGMRDDLRGEADSVVHDGT). The tract at residues 1-29 (MTRQGMRDDLRGEADSVVHDGTDDIDNEN) is disordered. 50–57 (GLSGAGRG) provides a ligand contact to ATP. 101 to 104 (DVRS) is a binding site for GTP.

Belongs to the RapZ-like family.

In terms of biological role, displays ATPase and GTPase activities. In Mycolicibacterium gilvum (strain PYR-GCK) (Mycobacterium gilvum (strain PYR-GCK)), this protein is Nucleotide-binding protein Mflv_3714.